Here is a 401-residue protein sequence, read N- to C-terminus: 1-deoxy-D-xylulose 5-phosphate reductoisomerase (401 aa).

Residues threonine 10, glycine 11, serine 12, isoleucine 13, glycine 36, arginine 37, asparagine 38, and asparagine 124 each coordinate NADPH. A 1-deoxy-D-xylulose 5-phosphate-binding site is contributed by lysine 125. Glutamate 126 contacts NADPH. Aspartate 150 contacts Mn(2+). Residues serine 151, glutamate 152, serine 176, and histidine 199 each contribute to the 1-deoxy-D-xylulose 5-phosphate site. Glutamate 152 contacts Mn(2+). Residue glycine 205 coordinates NADPH. 1-deoxy-D-xylulose 5-phosphate-binding residues include serine 212, asparagine 217, lysine 218, and glutamate 221. Glutamate 221 contacts Mn(2+).

This sequence belongs to the DXR family. It depends on Mg(2+) as a cofactor. Requires Mn(2+) as cofactor.

The enzyme catalyses 2-C-methyl-D-erythritol 4-phosphate + NADP(+) = 1-deoxy-D-xylulose 5-phosphate + NADPH + H(+). It participates in isoprenoid biosynthesis; isopentenyl diphosphate biosynthesis via DXP pathway; isopentenyl diphosphate from 1-deoxy-D-xylulose 5-phosphate: step 1/6. Functionally, catalyzes the NADPH-dependent rearrangement and reduction of 1-deoxy-D-xylulose-5-phosphate (DXP) to 2-C-methyl-D-erythritol 4-phosphate (MEP). The polypeptide is 1-deoxy-D-xylulose 5-phosphate reductoisomerase (Acaryochloris marina (strain MBIC 11017)).